We begin with the raw amino-acid sequence, 267 residues long: Tetrahydromethanopterin S-methyltransferase subunit C (267 aa).

Transmembrane regions (helical) follow at residues I19 to P39, I75 to G95, A97 to A117, T140 to V160, Y162 to H182, L198 to L218, and G221 to S241.

The protein belongs to the MtrC family. As to quaternary structure, the complex is composed of 8 subunits; MtrA, MtrB, MtrC, MtrD, MtrE, MtrF, MtrG and MtrH.

The protein resides in the cell membrane. It catalyses the reaction 5-methyl-5,6,7,8-tetrahydromethanopterin + coenzyme M + 2 Na(+)(in) = 5,6,7,8-tetrahydromethanopterin + methyl-coenzyme M + 2 Na(+)(out). It functions in the pathway one-carbon metabolism; methanogenesis from CO(2); methyl-coenzyme M from 5,10-methylene-5,6,7,8-tetrahydromethanopterin: step 2/2. Part of a complex that catalyzes the formation of methyl-coenzyme M and tetrahydromethanopterin from coenzyme M and methyl-tetrahydromethanopterin. This is an energy-conserving, sodium-ion translocating step. This chain is Tetrahydromethanopterin S-methyltransferase subunit C, found in Methanosarcina barkeri (strain Fusaro / DSM 804).